Consider the following 271-residue polypeptide: Formamidopyrimidine-DNA glycosylase (271 aa).

Proline 2 functions as the Schiff-base intermediate with DNA in the catalytic mechanism. Glutamate 3 acts as the Proton donor in catalysis. The active-site Proton donor; for beta-elimination activity is the lysine 57. Histidine 90, arginine 109, and lysine 150 together coordinate DNA. An FPG-type zinc finger spans residues leucine 235–lysine 269. Arginine 259 acts as the Proton donor; for delta-elimination activity in catalysis.

Belongs to the FPG family. As to quaternary structure, monomer. Zn(2+) is required as a cofactor.

It catalyses the reaction Hydrolysis of DNA containing ring-opened 7-methylguanine residues, releasing 2,6-diamino-4-hydroxy-5-(N-methyl)formamidopyrimidine.. The enzyme catalyses 2'-deoxyribonucleotide-(2'-deoxyribose 5'-phosphate)-2'-deoxyribonucleotide-DNA = a 3'-end 2'-deoxyribonucleotide-(2,3-dehydro-2,3-deoxyribose 5'-phosphate)-DNA + a 5'-end 5'-phospho-2'-deoxyribonucleoside-DNA + H(+). Involved in base excision repair of DNA damaged by oxidation or by mutagenic agents. Acts as a DNA glycosylase that recognizes and removes damaged bases. Has a preference for oxidized purines, such as 7,8-dihydro-8-oxoguanine (8-oxoG). Has AP (apurinic/apyrimidinic) lyase activity and introduces nicks in the DNA strand. Cleaves the DNA backbone by beta-delta elimination to generate a single-strand break at the site of the removed base with both 3'- and 5'-phosphates. This chain is Formamidopyrimidine-DNA glycosylase, found in Haemophilus influenzae (strain 86-028NP).